Consider the following 212-residue polypeptide: Peptide methionine sulfoxide reductase MsrA (212 aa).

The active site involves Cys52.

The protein belongs to the MsrA Met sulfoxide reductase family.

The catalysed reaction is L-methionyl-[protein] + [thioredoxin]-disulfide + H2O = L-methionyl-(S)-S-oxide-[protein] + [thioredoxin]-dithiol. It catalyses the reaction [thioredoxin]-disulfide + L-methionine + H2O = L-methionine (S)-S-oxide + [thioredoxin]-dithiol. Functionally, has an important function as a repair enzyme for proteins that have been inactivated by oxidation. Catalyzes the reversible oxidation-reduction of methionine sulfoxide in proteins to methionine. This is Peptide methionine sulfoxide reductase MsrA from Escherichia coli O6:K15:H31 (strain 536 / UPEC).